The following is a 71-amino-acid chain: uncharacterized protein (71 aa).

The segment at 23–71 (ENEKAGQSEEYDDDDKEENKKRRRNNGRRGPPEKKKSRRGGEEQTQRII) is disordered. A compositionally biased stretch (basic and acidic residues) spans 52–71 (GPPEKKKSRRGGEEQTQRII).

This is an uncharacterized protein from Caenorhabditis elegans.